The sequence spans 436 residues: Immediate-early phosphoprotein 57 (436 aa).

The tract at residues Val-71–Glu-140 is disordered. Residues Gln-104–Ser-119 are compositionally biased toward low complexity. Residues Lys-127–Leu-138 show a composition bias toward polar residues.

The protein belongs to the herpesviridae UL69 family.

Its subcellular location is the host nucleus. The protein localises to the host cytoplasm. In terms of biological role, acts at a post-transcriptional level to regulate viral gene expression. This chain is Immediate-early phosphoprotein 57 (57), found in Alcelaphine herpesvirus 1 (strain C500) (AlHV-1).